The sequence spans 516 residues: Probable inactive beta-glucosidase 14 (516 aa).

The signal sequence occupies residues 1 to 23 (MAAAWLVVLLTVHRLLHLSGVSA). A beta-D-glucoside-binding positions include Gln-43, His-145, and 190-191 (NQ). An N-linked (GlcNAc...) asparagine glycan is attached at Asn-193. A disulfide bridge connects residues Cys-210 and Cys-217. N-linked (GlcNAc...) asparagine glycosylation is found at Asn-221 and Asn-270. Residue Tyr-334 coordinates a beta-D-glucoside. Cys-342 and Cys-347 are oxidised to a cystine. Glu-405 lines the a beta-D-glucoside pocket. Glu-405 (nucleophile) is an active-site residue. N-linked (GlcNAc...) asparagine glycosylation is found at Asn-415 and Asn-423. Residues Trp-454, 461–462 (EW), and Phe-470 each bind a beta-D-glucoside.

The protein belongs to the glycosyl hydrolase 1 family. Expressed in flowers and endosperm.

In Oryza sativa subsp. japonica (Rice), this protein is Probable inactive beta-glucosidase 14.